Here is a 430-residue protein sequence, read N- to C-terminus: MMPSESETESRDRAAAQVGTAAAAAVAKAAPAGGGPDPEASSASLGQHLSGLSWPQVKRLDALLSEPIPIHGRGNFPTLSVQPRQIVQVVRSSLEEQGLRVHGVRLHGSAASHVLHPESGLGYKDLDLVFRVDLRSEASFQLTKEVVLACLLDFLPAGVSRAKITPLTLKEAYVQKLVKVCTDTDRWSLISLSNKSGKNVELKFVDSVRRQFEFSVDSFQILLDSLLLFSQCSPTPMSEAFHPSVTGESLYGDFAEALDHLRHRVIATRSPEEIRGGGLLKYCHLLVRGFRPRPSTDVGALQRYMCSRFFIDFPDLVEQRRTLERYLEAHFSGADAARRYACLVTLHRVVNESTVCLMNHERRQTLDLITALALQALAEQGPAAAAALAWRCPAIPDGLVPATTVSYYVTPVQPLLARAHASYPTWLPCN.

Positions 1–46 (MMPSESETESRDRAAAQVGTAAAAAVAKAAPAGGGPDPEASSASLG) are disordered. A compositionally biased stretch (low complexity) spans 15 to 44 (AAQVGTAAAAAVAKAAPAGGGPDPEASSAS).

This sequence belongs to the TENT family.

It localises to the cytoplasm. Its subcellular location is the nucleus. It carries out the reaction RNA(n) + ATP = RNA(n)-3'-adenine ribonucleotide + diphosphate. Catalyzes the transfer of one adenosine molecule from an ATP to an mRNA poly(A) tail bearing a 3'-OH terminal group in an ATP hydrolysis-dependent manner. May be involved in maintaining the translation efficiency of at least some genes through preventing degradation of their mRNAs. Prefers RNA molecules that are adenosine-rich close to 3'-end. In addition, may inhibit cell proliferation and cell cycle progression through ubiquitination of beta-catenin/CTNNB1. This chain is Terminal nucleotidyltransferase 5B, found in Bos taurus (Bovine).